Here is a 210-residue protein sequence, read N- to C-terminus: Calcineurin B-like protein 4 (210 aa).

Gly2 carries N-myristoyl glycine lipidation. 4 consecutive EF-hand domains span residues 31-66 (EVEA…RNSR), 67-102 (KANL…FHPK), 104-139 (PKSE…LLDE), and 148-183 (AVEA…NPAS). Ca(2+) is bound by residues Asp161, Asn163, Asp165, Arg167, and Glu172.

Belongs to the calcineurin regulatory subunit family. In terms of assembly, homodimer. Interacts with CIPK24. Expressed in leaves.

Its subcellular location is the cell membrane. Its function is as follows. Acts as a calcium sensor involved in the regulatory pathway for the control of intracellular Na(+) and K(+) homeostasis and salt tolerance. Operates in synergy with CIPK24 to activate the plasma membrane Na(+)/H(+) antiporter SOS1. May function as positive regulator of salt stress responses. CBL proteins interact with CIPK serine-threonine protein kinases. Binding of a CBL protein to the regulatory NAF domain of a CIPK protein lead to the activation of the kinase in a calcium-dependent manner. This Oryza sativa subsp. japonica (Rice) protein is Calcineurin B-like protein 4 (CBL4).